We begin with the raw amino-acid sequence, 84 residues long: MVIIRLARGGSKKRPFYNIVATDSRSRRDGRFIERVGFYNPVATKGESLRIAQDRLTYWQGVGAQLSPTVQRLVKEAQKAQPAA.

The protein belongs to the bacterial ribosomal protein bS16 family.

This chain is Small ribosomal subunit protein bS16, found in Paraburkholderia phymatum (strain DSM 17167 / CIP 108236 / LMG 21445 / STM815) (Burkholderia phymatum).